Consider the following 376-residue polypeptide: Chaperone protein DnaJ (376 aa).

The region spanning 5–70 is the J domain; that stretch reads DYYEVLGVAR…QKRAAYDQFG (66 aa). A CR-type zinc finger spans residues 134 to 212; sequence GTSVKIKVPT…CHGHGRVEET (79 aa). Positions 147, 150, 164, 167, 186, 189, 200, and 203 each coordinate Zn(2+). 4 CXXCXGXG motif repeats span residues 147-154, 164-171, 186-193, and 200-207; these read CTNCGGSG, CNTCGGHG, CPTCRGQG, and CNKCHGHG.

Belongs to the DnaJ family. Homodimer. Zn(2+) serves as cofactor.

It is found in the cytoplasm. In terms of biological role, participates actively in the response to hyperosmotic and heat shock by preventing the aggregation of stress-denatured proteins and by disaggregating proteins, also in an autonomous, DnaK-independent fashion. Unfolded proteins bind initially to DnaJ; upon interaction with the DnaJ-bound protein, DnaK hydrolyzes its bound ATP, resulting in the formation of a stable complex. GrpE releases ADP from DnaK; ATP binding to DnaK triggers the release of the substrate protein, thus completing the reaction cycle. Several rounds of ATP-dependent interactions between DnaJ, DnaK and GrpE are required for fully efficient folding. Also involved, together with DnaK and GrpE, in the DNA replication of plasmids through activation of initiation proteins. The chain is Chaperone protein DnaJ from Teredinibacter turnerae (strain ATCC 39867 / T7901).